Here is a 691-residue protein sequence, read N- to C-terminus: DNA ligase (691 aa).

NAD(+) is bound by residues 41-45 (DAEYD), 90-91 (SL), and Glu130. The N6-AMP-lysine intermediate role is filled by Lys132. Arg153, Glu190, Lys307, and Lys331 together coordinate NAD(+). Zn(2+) is bound by residues Cys425, Cys428, Cys443, and Cys449. Positions 610–691 (APQGVLAGKT…MHKLLEGHAR (82 aa)) constitute a BRCT domain.

The protein belongs to the NAD-dependent DNA ligase family. LigA subfamily. Mg(2+) is required as a cofactor. Mn(2+) serves as cofactor.

It carries out the reaction NAD(+) + (deoxyribonucleotide)n-3'-hydroxyl + 5'-phospho-(deoxyribonucleotide)m = (deoxyribonucleotide)n+m + AMP + beta-nicotinamide D-nucleotide.. Functionally, DNA ligase that catalyzes the formation of phosphodiester linkages between 5'-phosphoryl and 3'-hydroxyl groups in double-stranded DNA using NAD as a coenzyme and as the energy source for the reaction. It is essential for DNA replication and repair of damaged DNA. The polypeptide is DNA ligase (Burkholderia thailandensis (strain ATCC 700388 / DSM 13276 / CCUG 48851 / CIP 106301 / E264)).